A 417-amino-acid polypeptide reads, in one-letter code: RH-like protein IIR (417 aa).

Helical transmembrane passes span 12-32 (CLPL…YFFT), 44-64 (LVAS…GFGF), 77-97 (VAFS…LDGF), 125-145 (ISVD…MVLV), 172-192 (IYVF…KPLP), 203-223 (TIPS…WPSF), 238-258 (VFNT…GSSL), 265-285 (ISMS…GTSC), 287-307 (LIPS…ISVG), 331-351 (NFSW…VRHT), and 358-378 (MIGF…TIAL).

Belongs to the ammonium transporter (TC 2.A.49) family. Rh subfamily.

It localises to the membrane. Functionally, may be part of an oligomeric complex which is likely to have a transport or channel function in the erythrocyte membrane. The polypeptide is RH-like protein IIR (Pan troglodytes (Chimpanzee)).